We begin with the raw amino-acid sequence, 394 residues long: Gastricsin (394 aa).

The N-terminal stretch at 1 to 16 is a signal peptide; the sequence is MKWMVVVLLCLPLLEA. The propeptide at 17-65 is activation peptide; sequence TQIKVPLKKIKSIREVLREKGLLGDFLKNHKPQHARKFFRNRLAKTGDF. The Peptidase A1 domain occupies 79–391; sequence YFGQISLGTP…DLANNRVGFA (313 aa). Residue Asp-97 is part of the active site. Disulfide bonds link Cys-110-Cys-115 and Cys-273-Cys-277. Residue Thr-283 is part of the active site. A disulfide bond links Cys-316 and Cys-349.

Belongs to the peptidase A1 family.

It localises to the secreted. The enzyme catalyses More restricted specificity than pepsin A, but shows preferential cleavage at Tyr-|-Xaa bonds. High activity on hemoglobin.. Functionally, hydrolyzes a variety of proteins. The sequence is that of Gastricsin (PGC) from Cavia porcellus (Guinea pig).